Consider the following 291-residue polypeptide: 4-hydroxy-tetrahydrodipicolinate synthase (291 aa).

Thr44 contributes to the pyruvate binding site. Tyr132 serves as the catalytic Proton donor/acceptor. Catalysis depends on Lys160, which acts as the Schiff-base intermediate with substrate. Val202 provides a ligand contact to pyruvate.

The protein belongs to the DapA family. Homotetramer; dimer of dimers.

The protein resides in the cytoplasm. It catalyses the reaction L-aspartate 4-semialdehyde + pyruvate = (2S,4S)-4-hydroxy-2,3,4,5-tetrahydrodipicolinate + H2O + H(+). It participates in amino-acid biosynthesis; L-lysine biosynthesis via DAP pathway; (S)-tetrahydrodipicolinate from L-aspartate: step 3/4. Its function is as follows. Catalyzes the condensation of (S)-aspartate-beta-semialdehyde [(S)-ASA] and pyruvate to 4-hydroxy-tetrahydrodipicolinate (HTPA). In Clostridium perfringens (strain ATCC 13124 / DSM 756 / JCM 1290 / NCIMB 6125 / NCTC 8237 / Type A), this protein is 4-hydroxy-tetrahydrodipicolinate synthase.